We begin with the raw amino-acid sequence, 486 residues long: Betaine aldehyde dehydrogenase (486 aa).

Residues Thr-23 and Asp-90 each coordinate K(+). 147-149 (GAW) lines the NAD(+) pocket. The active-site Charge relay system is the Lys-159. NAD(+) contacts are provided by residues 173 to 176 (KPSE) and 226 to 229 (ESGT). Leu-241 contributes to the K(+) binding site. The active-site Proton acceptor is Glu-247. Residues Gly-249, Cys-281, and Glu-382 each coordinate NAD(+). Cys-281 functions as the Nucleophile in the catalytic mechanism. Cys-281 carries the post-translational modification Cysteine sulfenic acid (-SOH). K(+) is bound by residues Lys-452 and Gly-455. Glu-459 serves as the catalytic Charge relay system.

It belongs to the aldehyde dehydrogenase family. As to quaternary structure, dimer of dimers. Requires K(+) as cofactor.

The enzyme catalyses betaine aldehyde + NAD(+) + H2O = glycine betaine + NADH + 2 H(+). Its pathway is amine and polyamine biosynthesis; betaine biosynthesis via choline pathway; betaine from betaine aldehyde: step 1/1. Involved in the biosynthesis of the osmoprotectant glycine betaine. Catalyzes the irreversible oxidation of betaine aldehyde to the corresponding acid. The polypeptide is Betaine aldehyde dehydrogenase (Vibrio parahaemolyticus serotype O3:K6 (strain RIMD 2210633)).